Reading from the N-terminus, the 181-residue chain is Protein csk22 (181 aa).

5 helical membrane passes run 5-22 (LQSVYPAIIIIFFLYKKI), 35-57 (WLFTRIILFSLFAFGLSIFSAIH), 61-78 (YGYLILGILGGWLLVFFA), 91-113 (IYFRTHIWVEVILLTLFLSRFLY), and 140-162 (LTIGVCFLIAVYYIGFSSFIIKL).

The protein localises to the cell membrane. This Bacillus subtilis (strain 168) protein is Protein csk22 (csk22).